Reading from the N-terminus, the 265-residue chain is HUWE1-associated protein modifying stress responses (265 aa).

Disordered stretches follow at residues 1 to 22 (MEDKKEEGESEIQEHGPEHWFS), 145 to 170 (RNSRAPPRLTVVSPNRATPTETGSSV), 195 to 218 (VRSSTPGSPTHVSGSSNTGRRRNG), and 240 to 265 (GTRKRTSAQCGDVITDSPTHKRNRMI). 2 stretches are compositionally biased toward polar residues: residues 156-170 (VSPNRATPTETGSSV) and 195-212 (VRSSTPGSPTHVSGSSNT).

It belongs to the HAPSTR1 family. As to quaternary structure, oligomer.

Its subcellular location is the nucleus. It is found in the cytoplasm. Its function is as follows. Acts as a central player within a network of stress response pathways promoting cellular adaptability. Functions as a negative regulator of TP53/P53 in the cellular response to telomere erosion and probably also DNA damage. This chain is HUWE1-associated protein modifying stress responses, found in Xenopus tropicalis (Western clawed frog).